A 172-amino-acid chain; its full sequence is Large ribosomal subunit protein bL17 (172 aa).

Residues 123-172 (ATGSKRAQTEEAASQEPAAEAGKQPAEGATSVQTAEAADASQAEGEAEEK) form a disordered region. Over residues 132–143 (EEAASQEPAAEA) the composition is skewed to low complexity.

The protein belongs to the bacterial ribosomal protein bL17 family. As to quaternary structure, part of the 50S ribosomal subunit. Contacts protein L32.

This Thermobifida fusca (strain YX) protein is Large ribosomal subunit protein bL17.